The primary structure comprises 386 residues: MSSVEVVAQQLLAAEHPRRMGKGAAADPRRAALGELTNLNAVAATNGKVGPSKKPSKASCAQKPKPTELVAPMIQTGAAASAPVSAKPCVKEEQLCQAFSEVLLAVQDVDEQDADQPQLCSQYVKDIYKYLHVLEEQQPVRANYMQGYEVTERMRALLVDWLVQVHSRFQLLQETLYLTVAILDRFLQVHPVSRRKLQLVGVTAMLVACKYEEMYTPEVADFSYITDNAFTKSQIVEMEQVILRSLSFQLGRPLPLHFLRRATKVAGADVEKHTLAKYLMELTLLDYHMVHYRPSEVAAAALCLSQLLLDGLPWSLTQQQYSTYEEQHLKPIMRHIAKNVVLVNEGRTKFLAVKKKYSSSKLMKISLIPQLNSSTVKAMAESLHNP.

Residues 45–64 form a disordered region; it reads TNGKVGPSKKPSKASCAQKP.

Belongs to the cyclin family. Cyclin AB subfamily. In terms of assembly, interacts with the CDK1 protein kinase to form a serine/threonine kinase holoenzyme complex also known as maturation promoting factor (MPF). The cyclin subunit imparts substrate specificity to the complex.

Essential for the control of the cell cycle at the G2/M (mitosis) transition. The chain is G2/mitotic-specific cyclin-B2 (ccnb2) from Oryzias luzonensis (Luzon ricefish).